A 280-amino-acid chain; its full sequence is Ribosomal protein L11 methyltransferase (280 aa).

4 residues coordinate S-adenosyl-L-methionine: Thr131, Gly152, Asp174, and Asn217.

The protein belongs to the methyltransferase superfamily. PrmA family.

The protein localises to the cytoplasm. It carries out the reaction L-lysyl-[protein] + 3 S-adenosyl-L-methionine = N(6),N(6),N(6)-trimethyl-L-lysyl-[protein] + 3 S-adenosyl-L-homocysteine + 3 H(+). In terms of biological role, methylates ribosomal protein L11. This chain is Ribosomal protein L11 methyltransferase, found in Bacteroides fragilis (strain ATCC 25285 / DSM 2151 / CCUG 4856 / JCM 11019 / LMG 10263 / NCTC 9343 / Onslow / VPI 2553 / EN-2).